The following is a 980-amino-acid chain: Ovochymase-2 (980 aa).

A signal peptide spans 1–21; it reads MAETSVFSIMMLTVMTAVGRG. A propeptide spans 22 to 49 (activation peptide); sequence ATDRPGRVSRCGERPSANASVTYNLLSR. An N-linked (GlcNAc...) asparagine glycan is attached at Asn39. Residues 50–299 form the Peptidase S1 1 domain; the sequence is IVGGTSAVKG…LLNWLSANLN (250 aa). Cys75 and Cys91 are joined by a disulfide. His90 (charge relay system) is an active-site residue. Residues Val112 and Glu117 each coordinate Ca(2+). The active-site Charge relay system is the Asp140. 11 disulfides stabilise this stretch: Cys174–Cys244, Cys205–Cys223, Cys234–Cys263, Cys312–Cys342, Cys369–Cys388, Cys435–Cys462, Cys489–Cys510, Cys618–Cys634, Cys716–Cys779, Cys744–Cys757, and Cys769–Cys798. The active-site Charge relay system is Ser238. CUB domains are found at residues 312 to 425 and 435 to 547; these read CSTN…YQAV and CGSV…ISFV. Residues 593 to 822 enclose the Peptidase S1 2 domain; that stretch reads IIKAEEAMPN…FIPWIMETIL (230 aa). Positions 593–980 are cleaved as a propeptide — activation peptide; that stretch reads IIKAEEAMPN…WLSYSFHNQN (388 aa). Asn766 carries an N-linked (GlcNAc...) asparagine glycan. A disordered region spans residues 835-863; it reads HHPLIPPDKLSQEKALLPDSPPSNDSSSS. Asn858 and Asn932 each carry an N-linked (GlcNAc...) asparagine glycan.

Belongs to the peptidase S1 family. In terms of processing, the catalytically inactive 108 kDa form is processed both N- and C-terminally to give rise to catalytically active and inactive forms. Differentially expressed in the oviductal pars recta (PR) region.

It localises to the secreted. It catalyses the reaction Preferential cleavage at 371-Gly-Ser-Arg-|-Trp-374 of glycoprotein gp43 in Xenopus laevis coelemic egg envelope to yield gp41.. Its function is as follows. Mediates gamete interaction by affecting the vitelline coat. The polypeptide is Ovochymase-2 (OVCH2) (Rhinella arenarum (Argentine common toad)).